The primary structure comprises 98 residues: Cell division protein FtsB (98 aa).

The Cytoplasmic segment spans residues 1–3; sequence MKR. A helical membrane pass occupies residues 4–21; that stretch reads LLFVLIALLAMLQYRLWL. Residues 22–98 are Periplasmic-facing; sequence GDKSLADSFH…GGERGGVPEN (77 aa). Positions 31–74 form a coiled coil; it reads HLQEQIKLQQQSNAQLVARNQVLREEISDLRSGTEALEERARNE.

This sequence belongs to the FtsB family. As to quaternary structure, part of a complex composed of FtsB, FtsL and FtsQ.

The protein resides in the cell inner membrane. In terms of biological role, essential cell division protein. May link together the upstream cell division proteins, which are predominantly cytoplasmic, with the downstream cell division proteins, which are predominantly periplasmic. This Shewanella pealeana (strain ATCC 700345 / ANG-SQ1) protein is Cell division protein FtsB.